Consider the following 275-residue polypeptide: Endolytic peptidoglycan transglycosylase RlpA (275 aa).

Positions 1 to 22 are cleaved as a signal peptide; it reads MQIKTITLKLSAVSLGALFFSG. Residue C23 is the site of N-palmitoyl cysteine attachment. The S-diacylglycerol cysteine moiety is linked to residue C23. The 76-residue stretch at 200–275 folds into the SPOR domain; sequence IYEGGNFMVQ…AFAGAFVVRE (76 aa).

This sequence belongs to the RlpA family.

It localises to the cell membrane. In terms of biological role, lytic transglycosylase with a strong preference for naked glycan strands that lack stem peptides. The protein is Endolytic peptidoglycan transglycosylase RlpA of Campylobacter jejuni subsp. jejuni serotype O:2 (strain ATCC 700819 / NCTC 11168).